We begin with the raw amino-acid sequence, 907 residues long: Protein translocase subunit SecA (907 aa).

ATP contacts are provided by residues Gln87, 105–109, and Asp511; that span reads GEGKT. Zn(2+)-binding residues include Cys891, Cys893, Cys902, and His903.

Belongs to the SecA family. Monomer and homodimer. Part of the essential Sec protein translocation apparatus which comprises SecA, SecYEG and auxiliary proteins SecDF-YajC and YidC. Zn(2+) is required as a cofactor.

The protein localises to the cell inner membrane. It is found in the cytoplasm. It carries out the reaction ATP + H2O + cellular proteinSide 1 = ADP + phosphate + cellular proteinSide 2.. Its function is as follows. Part of the Sec protein translocase complex. Interacts with the SecYEG preprotein conducting channel. Has a central role in coupling the hydrolysis of ATP to the transfer of proteins into and across the cell membrane, serving both as a receptor for the preprotein-SecB complex and as an ATP-driven molecular motor driving the stepwise translocation of polypeptide chains across the membrane. The polypeptide is Protein translocase subunit SecA (Aromatoleum aromaticum (strain DSM 19018 / LMG 30748 / EbN1) (Azoarcus sp. (strain EbN1))).